Reading from the N-terminus, the 105-residue chain is Keratin-associated protein 17-1 (105 aa).

As to quaternary structure, interacts with hair keratins.

Its function is as follows. In the hair cortex, hair keratin intermediate filaments are embedded in an interfilamentous matrix, consisting of hair keratin-associated proteins (KRTAP), which are essential for the formation of a rigid and resistant hair shaft through their extensive disulfide bond cross-linking with abundant cysteine residues of hair keratins. The matrix proteins include the high-sulfur and high-glycine-tyrosine keratins. In Homo sapiens (Human), this protein is Keratin-associated protein 17-1 (KRTAP17-1).